The chain runs to 292 residues: MSELSAEEKRKLLRERRQAKMAQGKATDRLNNILSQGSSVKSSNVTSVLDKPEKATTTVMDLPSRETQSPTPLHDDPEVPDITSLLKEKENEAPDMEAMLQQILGGSGAHTGPGNDGGANFLQEMMKAMAEDPSGGSTAEESSYQSQLSQYHAYEQKQWKARFLVVRWIIHTLNFVYHYIASGYKLSASPYAFVRAQAVDSHVRTFFTAFLTVEVAVISAYFLVMSQPKFKDFSRENLVSRILSMASAVVPAVGRYQPLVTRALVYWNGASIFVGDLMLMVFYFGITSVLGN.

Over residues 1 to 18 (MSELSAEEKRKLLRERRQ) the composition is skewed to basic and acidic residues. A disordered region spans residues 1-80 (MSELSAEEKR…TPLHDDPEVP (80 aa)). Residues 1–158 (MSELSAEEKR…SQYHAYEQKQ (158 aa)) lie on the Cytoplasmic side of the membrane. 2 stretches are compositionally biased toward polar residues: residues 29 to 47 (RLNN…NVTS) and 55 to 71 (ATTT…QSPT). Residues 159-179 (WKARFLVVRWIIHTLNFVYHY) form a helical membrane-spanning segment. The Lumenal segment spans residues 180–205 (IASGYKLSASPYAFVRAQAVDSHVRT). The helical transmembrane segment at 206–225 (FFTAFLTVEVAVISAYFLVM) threads the bilayer. Topologically, residues 226-268 (SQPKFKDFSRENLVSRILSMASAVVPAVGRYQPLVTRALVYWN) are cytoplasmic. Residues 269–289 (GASIFVGDLMLMVFYFGITSV) traverse the membrane as a helical segment. At 290–292 (LGN) the chain is on the lumenal side.

It belongs to the GET2 family. In terms of assembly, component of the Golgi to ER traffic (GET) complex, which is composed of GET1, GET2 and GET3. Within the complex, GET1 and GET2 form a heterotetramer which is stabilized by phosphatidylinositol binding and which binds to the GET3 homodimer.

The protein localises to the endoplasmic reticulum membrane. Its subcellular location is the golgi apparatus membrane. Functionally, required for the post-translational delivery of tail-anchored (TA) proteins to the endoplasmic reticulum. Together with GET1, acts as a membrane receptor for soluble GET3, which recognizes and selectively binds the transmembrane domain of TA proteins in the cytosol. The GET complex cooperates with the HDEL receptor ERD2 to mediate the ATP-dependent retrieval of resident ER proteins that contain a C-terminal H-D-E-L retention signal from the Golgi to the ER. The sequence is that of Golgi to ER traffic protein 2 from Clavispora lusitaniae (strain ATCC 42720) (Yeast).